A 310-amino-acid chain; its full sequence is Haloalkane dehalogenase (310 aa).

The AB hydrolase-1 domain occupies 30–140; sequence PVVLFLHGNP…PMPTWQDFHH (111 aa). Asp-103 (nucleophile) is an active-site residue. The active-site Proton donor is the Glu-127. His-280 functions as the Proton acceptor in the catalytic mechanism.

Belongs to the haloalkane dehalogenase family. Type 2 subfamily. As to quaternary structure, monomer.

The catalysed reaction is 1-haloalkane + H2O = a halide anion + a primary alcohol + H(+). Its function is as follows. Catalyzes hydrolytic cleavage of carbon-halogen bonds in halogenated aliphatic compounds, leading to the formation of the corresponding primary alcohols, halide ions and protons. The polypeptide is Haloalkane dehalogenase (Bradyrhizobium diazoefficiens (strain JCM 10833 / BCRC 13528 / IAM 13628 / NBRC 14792 / USDA 110)).